A 173-amino-acid chain; its full sequence is MSLCRQNYHEECEAGVNKQINMELYASYVYMTMAFHFNRDDVALNGFYKFFLNESEEERQHAIKLMTYQNMRGGRIVLQDISAPPQLSWNSGLHAMQDALDLEKKVNQSLMELVAVGERHRDTHFCDFINNEYLEIQVQSMKKLSDYITNLIRVGNGLGEYTFDKETLHGESQ.

The region spanning Gln6–Gly155 is the Ferritin-like diiron domain. Glu23, Glu58, His61, Glu103, and Gln137 together coordinate Fe cation.

Belongs to the ferritin family. In terms of assembly, oligomer of 24 subunits. The functional molecule forms a roughly spherical shell with a diameter of 12 nm and contains a central cavity into which the insoluble mineral iron core is deposited.

It carries out the reaction 4 Fe(2+) + O2 + 4 H(+) = 4 Fe(3+) + 2 H2O. Stores iron in a soluble, non-toxic, readily available form. Important for iron homeostasis. Has ferroxidase activity. Iron is taken up in the ferrous form and deposited as ferric hydroxides after oxidation. In Schistosoma mansoni (Blood fluke), this protein is Ferritin-1 heavy chain (SCM-1).